The primary structure comprises 489 residues: Transcription factor TGAL11 (489 aa).

Over residues 87–99 (AATATATARPPAT) the composition is skewed to low complexity. A disordered region spans residues 87–181 (AATATATARP…SDHRMTKTLD (95 aa)). A compositionally biased stretch (polar residues) spans 121-139 (SNVTADTTDSESSSKNNGD). A compositionally biased stretch (low complexity) spans 148-159 (ASQFDQIPQQQQ). Residues 171 to 181 (HSDHRMTKTLD) show a composition bias toward basic and acidic residues. Residues 181–225 (DPKIMRRLAQNREAARKSRLRKKAYIQQLESSKLRLAQMEQDLER) enclose the bZIP domain. A basic motif region spans residues 183-203 (KIMRRLAQNREAARKSRLRKK). The tract at residues 209–223 (LESSKLRLAQMEQDL) is leucine-zipper. The DOG1 domain occupies 245–460 (AAMFDAEYGR…RALSSLWASR (216 aa)).

Belongs to the bZIP family.

It is found in the nucleus. Its function is as follows. Transcriptional regulator involved in defense response. This chain is Transcription factor TGAL11, found in Oryza sativa subsp. japonica (Rice).